A 419-amino-acid chain; its full sequence is Structure-specific endonuclease subunit slx4 (419 aa).

The protein belongs to the SLX4 family. As to quaternary structure, forms a heterodimer with slx1. Phosphorylated in response to DNA damage.

The protein localises to the nucleus. Its subcellular location is the nucleolus. Regulatory subunit of the slx1-slx4 structure-specific endonuclease that resolves DNA secondary structures generated during DNA repair and recombination. Has endonuclease activity towards branched DNA substrates, introducing single-strand cuts in duplex DNA close to junctions with ss-DNA. Has a preference for stem-loop (SL) and splayed arm Y structures. Introduces a single-strand cut in duplex DNA on the 3' side of a double-strand/single-strand junction with respect to the single-strand moving 3' to 5' away from the junction. Plays a critical role in maintaining the integrity of the ribosomal DNA (rDNA) loci, where it has a role in re-starting stalled replication forks. The complex initiates homologous recombination (HR) events, used to maintain rDNA copy number, in the rDNA repeats that are processed by a mechanism that requires rad22, but not rhp51. Has Holliday junction resolvase activity in vitro. Slx4 is required for efficient processing of DNA substrates. This is Structure-specific endonuclease subunit slx4 from Schizosaccharomyces pombe (strain 972 / ATCC 24843) (Fission yeast).